A 153-amino-acid polypeptide reads, in one-letter code: Endoribonuclease YbeY (153 aa).

The Zn(2+) site is built by H114, H118, and H124.

It belongs to the endoribonuclease YbeY family. Zn(2+) is required as a cofactor.

The protein resides in the cytoplasm. In terms of biological role, single strand-specific metallo-endoribonuclease involved in late-stage 70S ribosome quality control and in maturation of the 3' terminus of the 16S rRNA. The polypeptide is Endoribonuclease YbeY (Shewanella amazonensis (strain ATCC BAA-1098 / SB2B)).